We begin with the raw amino-acid sequence, 158 residues long: Transcription elongation factor GreA (158 aa).

The protein belongs to the GreA/GreB family.

In terms of biological role, necessary for efficient RNA polymerase transcription elongation past template-encoded arresting sites. The arresting sites in DNA have the property of trapping a certain fraction of elongating RNA polymerases that pass through, resulting in locked ternary complexes. Cleavage of the nascent transcript by cleavage factors such as GreA or GreB allows the resumption of elongation from the new 3'terminus. GreA releases sequences of 2 to 3 nucleotides. This chain is Transcription elongation factor GreA, found in Baumannia cicadellinicola subsp. Homalodisca coagulata.